The primary structure comprises 463 residues: Glucagon-like peptide 1 receptor (463 aa).

The N-terminal stretch at 1 to 21 (MAVTPSLLRLALLLLGAVGRA) is a signal peptide. The Extracellular segment spans residues 22–139 (GPRPQGATVS…KQGERNSPEE (118 aa)). Disulfide bonds link Cys-46–Cys-71, Cys-62–Cys-104, and Cys-85–Cys-126. Residues Asn-63, Asn-82, and Asn-115 are each glycosylated (N-linked (GlcNAc...) asparagine). The chain crosses the membrane as a helical span at residues 140–164 (QLLSLYIIYTVGYALSFSALVIASA). Over 165 to 175 (ILVSFRHLHCT) the chain is Cytoplasmic. A helical membrane pass occupies residues 176–201 (RNYIHLNLFASFILRALSVFIKDAAL). Residues 202–227 (KWMYSTAAQQHQWDGLLSYQDSLGCR) are Extracellular-facing. A disulfide bridge connects residues Cys-226 and Cys-296. The helical transmembrane segment at 228 to 251 (LVFLLMQYCVAANYYWLLVEGVYL) threads the bilayer. Residues 252–265 (YTLLAFSVFSEQRI) lie on the Cytoplasmic side of the membrane. Residues 266–290 (FKLYLSIGWGVPLLFVIPWGIVKYL) form a helical membrane-spanning segment. The Extracellular segment spans residues 291–305 (YEDEGCWTRNSNMNY). A helical transmembrane segment spans residues 306-328 (WLIIRLPILFAIGVNFLVFIRVI). Over 329 to 348 (CIVIAKLKANLMCKTDIKCR) the chain is Cytoplasmic. Cys-341 is subject to ADP-ribosylcysteine. Arg-348 carries the post-translational modification ADP-ribosylarginine. The chain crosses the membrane as a helical span at residues 349-370 (LAKSTLTLIPLLGTHEVIFAFV). Residues 352-355 (STLT) are important for allosteric inhibitor binding. The Extracellular portion of the chain corresponds to 371-383 (MDEHARGTLRFVK). Residues 384–404 (LFTELSFTSFQGFMVAVLYCF) traverse the membrane as a helical segment. The Cytoplasmic portion of the chain corresponds to 405-463 (VNNEVQMEFRKSWERWRLERLNIQRDSSMKPLKCPTSSVSSGATVGSSVYAATCQNSCS).

It belongs to the G-protein coupled receptor 2 family. In terms of assembly, may form homodimers and heterodimers with GIPR. Post-translationally, N-glycosylation enhances cell surface expression and lengthens receptor half-life by preventing degradation in the ER. Pancreatic islets, stomach, lung, rat insulinoma cell line.

Its subcellular location is the cell membrane. Functionally, G-protein coupled receptor for glucagon-like peptide 1 (GLP-1). Ligand binding triggers activation of a signaling cascade that leads to the activation of adenylyl cyclase and increased intracellular cAMP levels. Plays a role in regulating insulin secretion in response to GLP-1. This Rattus norvegicus (Rat) protein is Glucagon-like peptide 1 receptor (Glp1r).